A 591-amino-acid polypeptide reads, in one-letter code: Thiol:disulfide interchange protein DsbD 1 (591 aa).

A signal peptide spans 1-18 (MRRLLTLILLLVALPAGA). Residues 19–175 (GLFDSRPGAS…GPLEHKGKRS (157 aa)) are Periplasmic-facing. Cystine bridges form between C134–C140 and C191–C313. The helical transmembrane segment at 176 to 196 (LLFFFLAGLTLTFTPCVLPML) threads the bilayer. Residues 197–213 (PILSGVVLRGRPGGGRG) are Cytoplasmic-facing. Residues 214–234 (FVLSLAYVLPMALCFALLGAL) traverse the membrane as a helical segment. Over 235–251 (MGMFGASLNLQAQLQSP) the chain is Periplasmic. The chain crosses the membrane as a helical span at residues 252-272 (WVLVPFAAFFALFAVAMFGFF). Residues 273–295 (ELRLPGFIREPLDRLAGDARGGS) lie on the Cytoplasmic side of the membrane. A helical membrane pass occupies residues 296–316 (ILGAATLGVLSSLLVSPCVSA). At 317–338 (PLAASLLYISASGDAWGGGLQL) the chain is on the periplasmic side. A helical transmembrane segment spans residues 339 to 359 (FALGLGMGTPLVVFGAGGGAL). Topologically, residues 360-365 (LPKSGA) are cytoplasmic. The helical transmembrane segment at 366–386 (WMNGVRNAFGVLLLAVAVWLL) threads the bilayer. Residues 387–392 (ERVVSG) lie on the Periplasmic side of the membrane. A helical transmembrane segment spans residues 393–413 (PVALMLWGMLAGGAGLALGAL). Over 414–423 (EFTPKSAARR) the chain is Cytoplasmic. A helical transmembrane segment spans residues 424–444 (LLQLLGLMFLTYAVAAWIGAL). The Periplasmic segment spans residues 445 to 591 (QGESDPIHPL…ERLRRAATRQ (147 aa)). Residues 452–589 (HPLGRSVPSI…LAERLRRAAT (138 aa)) form the Thioredoxin domain. The cysteines at positions 504 and 507 are disulfide-linked.

Belongs to the thioredoxin family. DsbD subfamily.

The protein resides in the cell inner membrane. It catalyses the reaction [protein]-dithiol + NAD(+) = [protein]-disulfide + NADH + H(+). The catalysed reaction is [protein]-dithiol + NADP(+) = [protein]-disulfide + NADPH + H(+). Required to facilitate the formation of correct disulfide bonds in some periplasmic proteins and for the assembly of the periplasmic c-type cytochromes. Acts by transferring electrons from cytoplasmic thioredoxin to the periplasm. This transfer involves a cascade of disulfide bond formation and reduction steps. The sequence is that of Thiol:disulfide interchange protein DsbD 1 from Pseudomonas aeruginosa (strain ATCC 15692 / DSM 22644 / CIP 104116 / JCM 14847 / LMG 12228 / 1C / PRS 101 / PAO1).